We begin with the raw amino-acid sequence, 238 residues long: Sugar fermentation stimulation protein homolog (238 aa).

Belongs to the SfsA family.

This Haemophilus influenzae (strain ATCC 51907 / DSM 11121 / KW20 / Rd) protein is Sugar fermentation stimulation protein homolog.